The sequence spans 382 residues: 1-deoxy-D-xylulose 5-phosphate reductoisomerase (382 aa).

NADPH contacts are provided by threonine 10, glycine 11, serine 12, isoleucine 13, glycine 36, and asparagine 122. 1-deoxy-D-xylulose 5-phosphate is bound at residue lysine 123. NADPH is bound at residue glutamate 124. Position 148 (aspartate 148) interacts with Mn(2+). Residues serine 149, glutamate 150, serine 174, and histidine 197 each coordinate 1-deoxy-D-xylulose 5-phosphate. Glutamate 150 contributes to the Mn(2+) binding site. Residue glycine 203 coordinates NADPH. Serine 210, asparagine 215, lysine 216, and glutamate 219 together coordinate 1-deoxy-D-xylulose 5-phosphate. Glutamate 219 is a Mn(2+) binding site.

Belongs to the DXR family. Mg(2+) serves as cofactor. The cofactor is Mn(2+).

It carries out the reaction 2-C-methyl-D-erythritol 4-phosphate + NADP(+) = 1-deoxy-D-xylulose 5-phosphate + NADPH + H(+). It functions in the pathway isoprenoid biosynthesis; isopentenyl diphosphate biosynthesis via DXP pathway; isopentenyl diphosphate from 1-deoxy-D-xylulose 5-phosphate: step 1/6. Functionally, catalyzes the NADPH-dependent rearrangement and reduction of 1-deoxy-D-xylulose-5-phosphate (DXP) to 2-C-methyl-D-erythritol 4-phosphate (MEP). The sequence is that of 1-deoxy-D-xylulose 5-phosphate reductoisomerase from Chlorobium chlorochromatii (strain CaD3).